Here is a 330-residue protein sequence, read N- to C-terminus: Ferric enterobactin transport system permease protein FepG (330 aa).

Over 1–7 (MIYVSRR) the chain is Periplasmic. Residues 8 to 28 (LLITCLLLVSACVVAGIWGLR) form a helical membrane-spanning segment. Topologically, residues 29–62 (SGAVTLETSQVFAALMGDAPRSMTMVVTEWRLPR) are cytoplasmic. A helical transmembrane segment spans residues 63-83 (VLMALLIGAALGVSGAIFQSL). Topologically, residues 84-92 (MRNPLGSPD) are periplasmic. A helical membrane pass occupies residues 93–113 (VMGFNTGAWSGVLVAMVLFGQ). Residues 114–117 (DLTA) lie on the Cytoplasmic side of the membrane. Residues 118 to 138 (IALSAMVGGIVTSLLVWLLAW) traverse the membrane as a helical segment. The Periplasmic segment spans residues 139–146 (RNGIDTFR). Residues 147 to 167 (LIIIGIGVRAMLVAFNTWLLL) form a helical membrane-spanning segment. Residues 168–190 (KASLETALTAGLWNAGSLNGLTW) lie on the Cytoplasmic side of the membrane. Residues 191 to 211 (AKTSPSAPIIILMLIAAALLV) traverse the membrane as a helical segment. Residues 212–235 (RRMRLLEMGDDTACALGVSVERSR) lie on the Periplasmic side of the membrane. A helical membrane pass occupies residues 236 to 256 (LLMMLVAVVLTAAATALAGPI). Residues 257 to 275 (SFIALVAPHIARRISGTAR) lie on the Cytoplasmic side of the membrane. The chain crosses the membrane as a helical span at residues 276–296 (WGLTQAALCGALLLLAADLCA). The Periplasmic segment spans residues 297–303 (QQLFMPY). A helical membrane pass occupies residues 304–324 (QLPVGVVTVSLGGIYLIVLLI). Residues 325 to 330 (QESRKK) are Cytoplasmic-facing.

Belongs to the binding-protein-dependent transport system permease family. FecCD subfamily. The complex is composed of two ATP-binding proteins (FepC), two transmembrane proteins (FepD and FepG) and a solute-binding protein (FepB).

It localises to the cell inner membrane. Functionally, part of the ABC transporter complex FepBDGC involved in ferric enterobactin uptake. Responsible for the translocation of the substrate across the membrane. In Escherichia coli (strain K12), this protein is Ferric enterobactin transport system permease protein FepG (fepG).